The sequence spans 133 residues: ATP synthase epsilon chain, chloroplastic (133 aa).

The protein belongs to the ATPase epsilon chain family. F-type ATPases have 2 components, CF(1) - the catalytic core - and CF(0) - the membrane proton channel. CF(1) has five subunits: alpha(3), beta(3), gamma(1), delta(1), epsilon(1). CF(0) has three main subunits: a, b and c.

It localises to the plastid. The protein resides in the chloroplast thylakoid membrane. In terms of biological role, produces ATP from ADP in the presence of a proton gradient across the membrane. In Lactuca sativa (Garden lettuce), this protein is ATP synthase epsilon chain, chloroplastic.